The sequence spans 148 residues: Urease accessory protein UreE (148 aa).

Belongs to the UreE family.

It is found in the cytoplasm. Its function is as follows. Involved in urease metallocenter assembly. Binds nickel. Probably functions as a nickel donor during metallocenter assembly. This Bacillus sp. (strain TB-90) protein is Urease accessory protein UreE.